Reading from the N-terminus, the 119-residue chain is C-C motif chemokine 24 (119 aa).

Residues 1–26 (MAGLMTIVTSLLFLGVCAHHIIPTGS) form the signal peptide. 2 cysteine pairs are disulfide-bonded: cysteine 33-cysteine 58 and cysteine 34-cysteine 74. The N-linked (GlcNAc...) asparagine glycan is linked to asparagine 115.

This sequence belongs to the intercrine beta (chemokine CC) family. Post-translationally, N-glycosylated. Activated monocytes and activated T lymphocytes.

The protein resides in the secreted. Chemotactic for resting T-lymphocytes, and eosinophils. Has lower chemotactic activity for neutrophils but none for monocytes and activated lymphocytes. Is a strong suppressor of colony formation by a multipotential hematopoietic progenitor cell line. Binds to CCR3. This Homo sapiens (Human) protein is C-C motif chemokine 24.